The sequence spans 440 residues: Cyclic dipeptide prenyltransferase (440 aa).

The interval 1–33 is disordered; sequence MDGEMTASPPDISACDTSAVDEQTGQSGQSQAP. Over residues 20 to 32 the composition is skewed to polar residues; that stretch reads VDEQTGQSGQSQA. Positions 108 and 116 each coordinate substrate. The dimethylallyl diphosphate site is built by arginine 129, lysine 219, and tyrosine 221. Position 223 (phenylalanine 223) interacts with substrate. Dimethylallyl diphosphate is bound by residues lysine 286, tyrosine 288, tyrosine 366, tyrosine 431, and tyrosine 435.

The protein belongs to the tryptophan dimethylallyltransferase family.

It carries out the reaction harmol + dimethylallyl diphosphate = 6-(3-dimethylallyl)harmol + diphosphate. The catalysed reaction is an N-terminal L-tryptophanyl-L-alpha-aminoacyl-[peptide] + H2O = an N-terminal L-alpha-aminoacyl-[peptide] + L-tryptophan. The enzyme catalyses (R)-benzodiazepinedione + dimethylallyl diphosphate = (2S,3R,11R)-aszonalenin + diphosphate. It catalyses the reaction (S)-benzodiazepinedione + dimethylallyl diphosphate = (2S,3R,11S)-aszonalenin + diphosphate. Functionally, prenyltransferase that catalyzes reverse prenylation at position N-1 of tryptophan-containing cyclic dipeptides. Accepts only dimethylallyl diphosphate (DMAPP) as the prenyl donor but shows broad substrate specificities toward its aromatic substrates. Also shows tryptophan aminopeptidase activity with preference for linear peptides containing a tryptophanyl moiety at the N-terminus. The protein is Cyclic dipeptide prenyltransferase of Aspergillus fumigatus (Neosartorya fumigata).